The sequence spans 395 residues: Elongation factor Tu (395 aa).

Residues 10–204 form the tr-type G domain; it reads KPHVNIGTIG…AVDEYIPTPQ (195 aa). Positions 19 to 26 are G1; it reads GHVDHGKT. GTP is bound at residue 19-26; it reads GHVDHGKT. Mg(2+) is bound at residue Thr-26. Positions 60–64 are G2; sequence GITIS. A G3 region spans residues 81-84; it reads DCPG. GTP-binding positions include 81–85 and 136–139; these read DCPGH and NKCD. The interval 136–139 is G4; it reads NKCD. The segment at 174-176 is G5; that stretch reads SAL.

It belongs to the TRAFAC class translation factor GTPase superfamily. Classic translation factor GTPase family. EF-Tu/EF-1A subfamily. Monomer.

It is found in the cytoplasm. It catalyses the reaction GTP + H2O = GDP + phosphate + H(+). Its function is as follows. GTP hydrolase that promotes the GTP-dependent binding of aminoacyl-tRNA to the A-site of ribosomes during protein biosynthesis. In Geobacillus kaustophilus (strain HTA426), this protein is Elongation factor Tu.